Reading from the N-terminus, the 231-residue chain is MRLVIADCSVRYEGRLNAHLPLARRLIMLKADGSVLIHSDGGSYKPLNWMSPPATLRVREPSEELLADGVKEVWEVQAGKSDDRLVIHIMTVHSRLEHELGADPGLIKDGVEADLQRLLAEQITLLGEGFSLVRREYPTTIGPVDILARDANGATVAVELKRRGDIDGVEQLTRYLELLNRDPLLRPVRGVFAAQQIKPQARTLARDRGIECLSLDYDEMRGNVDTQSRLF.

The protein belongs to the NucS endonuclease family.

It is found in the cytoplasm. Functionally, cleaves both 3' and 5' ssDNA extremities of branched DNA structures. This is Endonuclease NucS from Kocuria rhizophila (strain ATCC 9341 / DSM 348 / NBRC 103217 / DC2201).